Consider the following 389-residue polypeptide: Xylose isomerase (389 aa).

Catalysis depends on residues histidine 101 and aspartate 104. Glutamate 232, glutamate 268, histidine 271, aspartate 296, aspartate 307, and aspartate 309 together coordinate Mg(2+).

The protein belongs to the xylose isomerase family. As to quaternary structure, homotetramer. It depends on Mg(2+) as a cofactor.

Its subcellular location is the cytoplasm. It carries out the reaction alpha-D-xylose = alpha-D-xylulofuranose. The protein is Xylose isomerase of Lactococcus lactis subsp. cremoris (strain SK11).